The chain runs to 292 residues: Large ribosomal subunit protein bL19m (292 aa).

The interval 39 to 68 is disordered; that stretch reads GPGRRQITGPSEPGVFQPPPKPVIVDKRGP. Ser-77 carries the post-translational modification Phosphoserine.

Belongs to the bacterial ribosomal protein bL19 family. Component of the mitochondrial ribosome large subunit (39S) which comprises a 16S rRNA and about 50 distinct proteins.

Its subcellular location is the mitochondrion. In Bos taurus (Bovine), this protein is Large ribosomal subunit protein bL19m (MRPL19).